Consider the following 121-residue polypeptide: Ribonuclease CL2 (121 aa).

Substrate-binding residues include K6 and R9. The active-site Proton acceptor is H11. Cystine bridges form between C26-C81, C42-C92, and C60-C107. Substrate is bound by residues 43–47 and R82; that span reads KPSNT. The Proton donor role is filled by H114.

Belongs to the pancreatic ribonuclease family.

Its subcellular location is the secreted. Its function is as follows. Pyrimidine-specific nuclease with preference for C. The sequence is that of Ribonuclease CL2 from Gallus gallus (Chicken).